A 268-amino-acid polypeptide reads, in one-letter code: L-aspartate dehydrogenase (268 aa).

Residues A125 and N191 each coordinate NAD(+). Residue H221 is part of the active site.

Belongs to the L-aspartate dehydrogenase family.

It catalyses the reaction L-aspartate + NADP(+) + H2O = oxaloacetate + NH4(+) + NADPH + H(+). The enzyme catalyses L-aspartate + NAD(+) + H2O = oxaloacetate + NH4(+) + NADH + H(+). It functions in the pathway cofactor biosynthesis; NAD(+) biosynthesis; iminoaspartate from L-aspartate (dehydrogenase route): step 1/1. Functionally, specifically catalyzes the NAD or NADP-dependent dehydrogenation of L-aspartate to iminoaspartate. This chain is L-aspartate dehydrogenase, found in Brucella anthropi (strain ATCC 49188 / DSM 6882 / CCUG 24695 / JCM 21032 / LMG 3331 / NBRC 15819 / NCTC 12168 / Alc 37) (Ochrobactrum anthropi).